Here is a 284-residue protein sequence, read N- to C-terminus: Glutamate 5-kinase 2 (284 aa).

Lysine 26 provides a ligand contact to ATP. Positions 67, 154, and 166 each coordinate substrate. ATP contacts are provided by residues 186–187 (SD) and 228–234 (SGGMVTK).

It belongs to the glutamate 5-kinase family.

The protein resides in the cytoplasm. The enzyme catalyses L-glutamate + ATP = L-glutamyl 5-phosphate + ADP. Its pathway is amino-acid biosynthesis; L-proline biosynthesis; L-glutamate 5-semialdehyde from L-glutamate: step 1/2. In terms of biological role, catalyzes the transfer of a phosphate group to glutamate to form L-glutamate 5-phosphate. The polypeptide is Glutamate 5-kinase 2 (Mesorhizobium japonicum (strain LMG 29417 / CECT 9101 / MAFF 303099) (Mesorhizobium loti (strain MAFF 303099))).